The chain runs to 532 residues: Pyruvate kinase (532 aa).

Arg-63 contributes to the substrate binding site. The K(+) site is built by Asn-65, Ser-67, Asp-99, and Thr-100. 65–68 (NFSH) is an ATP binding site. Positions 106 and 191 each coordinate ATP. Glu-256 lines the Mg(2+) pocket. 3 residues coordinate substrate: Gly-279, Asp-280, and Thr-312. Asp-280 contacts Mg(2+).

The protein belongs to the pyruvate kinase family. In terms of assembly, homotetramer. Requires Mg(2+) as cofactor. K(+) is required as a cofactor.

It catalyses the reaction pyruvate + ATP = phosphoenolpyruvate + ADP + H(+). The protein operates within carbohydrate degradation; glycolysis; pyruvate from D-glyceraldehyde 3-phosphate: step 5/5. This is Pyruvate kinase (pkiA) from Agaricus bisporus (White button mushroom).